The following is a 275-amino-acid chain: MSNAQLETAIEAAWEARDTITPATMGETREAIEDTLAALDGGTLRVAEKQDSGDWHVNQWAKKAVLLGFRLKDMEMQGGSAQGGSWWDKVDSKWATWGDNEWGAAGFRAVPNCVVRKSAYIAPGVVLMPSFVNLGAYVDSGTMVDTWATVGSCAQIGKNVHLSGGVGIGGVLEPMQAGPTIIEDNCFIGARSEVVEGCIVREGSVLGMGVFIGQSTKIVDRETGDVMYGEVPSGSVVVAGSLPSKNGVNLYCAVIVKRVDERTRSKTSINELLRD.

Arginine 108 and aspartate 145 together coordinate substrate.

This sequence belongs to the transferase hexapeptide repeat family. In terms of assembly, homotrimer.

It localises to the cytoplasm. The enzyme catalyses (S)-2,3,4,5-tetrahydrodipicolinate + succinyl-CoA + H2O = (S)-2-succinylamino-6-oxoheptanedioate + CoA. The protein operates within amino-acid biosynthesis; L-lysine biosynthesis via DAP pathway; LL-2,6-diaminopimelate from (S)-tetrahydrodipicolinate (succinylase route): step 1/3. This chain is 2,3,4,5-tetrahydropyridine-2,6-dicarboxylate N-succinyltransferase, found in Jannaschia sp. (strain CCS1).